The chain runs to 55 residues: Large ribosomal subunit protein uL30 (55 aa).

This sequence belongs to the universal ribosomal protein uL30 family. Part of the 50S ribosomal subunit.

Binds the 5S and 23S rRNAs. This is Large ribosomal subunit protein uL30 from Deinococcus radiodurans (strain ATCC 13939 / DSM 20539 / JCM 16871 / CCUG 27074 / LMG 4051 / NBRC 15346 / NCIMB 9279 / VKM B-1422 / R1).